Here is a 223-residue protein sequence, read N- to C-terminus: Small ribosomal subunit protein uS3 (223 aa).

In terms of domain architecture, KH type-2 spans 38–106; it reads IKKYLKSKLA…EVHLNIVEIR (69 aa).

It belongs to the universal ribosomal protein uS3 family. As to quaternary structure, part of the 30S ribosomal subunit. Forms a tight complex with proteins S10 and S14.

In terms of biological role, binds the lower part of the 30S subunit head. Binds mRNA in the 70S ribosome, positioning it for translation. The polypeptide is Small ribosomal subunit protein uS3 (Rhodospirillum rubrum (strain ATCC 11170 / ATH 1.1.1 / DSM 467 / LMG 4362 / NCIMB 8255 / S1)).